The following is a 199-amino-acid chain: MYIPMVVEQSGRGERAYDIYSRLLKERIIFLGGGIDDQVANLIIAQLLFLEAEDPDKDIHLYINSPGGVVTSGMAIYDTMRYIKAPVSTICVGQAASMGAVLLAAGEKGKRFSLNHSRIMIHQPLGGFQGQATDISIHAKEILRMKEELNSILADLTGQSKERIEADTDRDYFMSATEAEEYGLIDATFTRKPDSGGTP.

The active-site Nucleophile is S97. H122 is an active-site residue.

The protein belongs to the peptidase S14 family. Fourteen ClpP subunits assemble into 2 heptameric rings which stack back to back to give a disk-like structure with a central cavity, resembling the structure of eukaryotic proteasomes.

Its subcellular location is the cytoplasm. It catalyses the reaction Hydrolysis of proteins to small peptides in the presence of ATP and magnesium. alpha-casein is the usual test substrate. In the absence of ATP, only oligopeptides shorter than five residues are hydrolyzed (such as succinyl-Leu-Tyr-|-NHMec, and Leu-Tyr-Leu-|-Tyr-Trp, in which cleavage of the -Tyr-|-Leu- and -Tyr-|-Trp bonds also occurs).. Its function is as follows. Cleaves peptides in various proteins in a process that requires ATP hydrolysis. Has a chymotrypsin-like activity. Plays a major role in the degradation of misfolded proteins. This Pelobacter propionicus (strain DSM 2379 / NBRC 103807 / OttBd1) protein is ATP-dependent Clp protease proteolytic subunit.